We begin with the raw amino-acid sequence, 400 residues long: NAD-dependent protein deacetylase sirtuin-7 (400 aa).

A disordered region spans residues 1 to 28 (MAAGGLSRSERKAAERVRRLREEQQRER). The span at 8–28 (RSERKAAERVRRLREEQQRER) shows a compositional bias: basic and acidic residues. Residues 82 to 329 (PEELQRKVRE…QLLMDELGLE (248 aa)) form the Deacetylase sirtuin-type domain. NAD(+) contacts are provided by residues 107–126 (GAGISTAASIPDYRGPNGVW) and 167–170 (QNCD). The active-site Proton acceptor is the H187. Zn(2+) contacts are provided by C195, C198, C225, and C228. NAD(+)-binding positions include 268–270 (GSS), 297–299 (NLQ), and C315. A disordered region spans residues 354-380 (SHSRKSLCRSREEPGPGDRGAPLSSAP). R388 bears the Asymmetric dimethylarginine; alternate mark. R388 carries the post-translational modification Omega-N-methylarginine; alternate.

The protein belongs to the sirtuin family. Class IV subfamily. Interacts with UBTF and the RNA polymerase I complex. Interacts with components of the B-WICH complex, such as MYBBP1A, SMARCA5/SNF2H and BAZ1B/WSTF. Interacts with ELK4, leading to stabilization at target promoters for H3K18Ac deacetylation. Interacts with histone H2A and/or histone H2B. Interacts with DNMT1. Interacts with SIRT1. It depends on Zn(2+) as a cofactor. Post-translationally, phosphorylated during mitosis. In terms of processing, methylation at Arg-388 by PRMT6 inhibits the H3K18Ac histone deacetylase activity, promoting mitochondria biogenesis and maintaining mitochondria respiration. Ubiquitinated via 'Lys-63'-linked ubiquitin chains. Deubiquitinated by USP7, inhibiting the H3K18Ac histone deacetylase activity and regulating gluconeogenesis. Ubiquitinated by E3 ubiquitin-protein ligase complex containing FBXO7; leading to proteasomal degradation.

It is found in the nucleus. The protein resides in the nucleolus. Its subcellular location is the nucleoplasm. It localises to the chromosome. The protein localises to the cytoplasm. The enzyme catalyses N(6)-acetyl-L-lysyl-[protein] + NAD(+) + H2O = 2''-O-acetyl-ADP-D-ribose + nicotinamide + L-lysyl-[protein]. It catalyses the reaction N(6)-glutaryl-L-lysyl-[protein] + NAD(+) + H2O = 2''-O-glutaryl-ADP-D-ribose + nicotinamide + L-lysyl-[protein]. It carries out the reaction N(6)-succinyl-L-lysyl-[protein] + NAD(+) + H2O = 2''-O-succinyl-ADP-D-ribose + nicotinamide + L-lysyl-[protein]. The catalysed reaction is N(6)-propanoyl-L-lysyl-[protein] + NAD(+) + H2O = 3''-O-propanoyl-ADP-D-ribose + nicotinamide + L-lysyl-[protein]. The enzyme catalyses N(6)-decanoyl-L-lysyl-[protein] + NAD(+) + H2O = 2''-O-decanoyl-ADP-D-ribose + nicotinamide + L-lysyl-[protein]. NAD-dependent protein-lysine deacetylase and deacylase activities are activated by nucleic acids. Histone deacetylase activity is activated by DNA. Protein-lysine deacylase activity is activated by RNA. H3K18Ac histone deacetylase activity is inhibited by methylation at Arg-388. H3K18Ac histone deacetylase activity is inhibited by deubiquitination by USP7. Its function is as follows. NAD-dependent protein-lysine deacylase that can act both as a deacetylase or deacylase (desuccinylase, depropionylase, deglutarylase and dedecanoylase), depending on the context. Specifically mediates deacetylation of histone H3 at 'Lys-18' (H3K18Ac). In contrast to other histone deacetylases, displays strong preference for a specific histone mark, H3K18Ac, directly linked to control of gene expression. H3K18Ac is mainly present around the transcription start site of genes and has been linked to activation of nuclear hormone receptors; SIRT7 thereby acts as a transcription repressor. Moreover, H3K18 hypoacetylation has been reported as a marker of malignancy in various cancers and seems to maintain the transformed phenotype of cancer cells. Also able to mediate deacetylation of histone H3 at 'Lys-36' (H3K36Ac) in the context of nucleosomes. Also mediates deacetylation of non-histone proteins, such as ATM, CDK9, DDX21, DDB1, FBL, FKBP5/FKBP51, GABPB1, RAN, RRP9/U3-55K and POLR1E/PAF53. Enriched in nucleolus where it stimulates transcription activity of the RNA polymerase I complex. Acts by mediating the deacetylation of the RNA polymerase I subunit POLR1E/PAF53, thereby promoting the association of RNA polymerase I with the rDNA promoter region and coding region. In response to metabolic stress, SIRT7 is released from nucleoli leading to hyperacetylation of POLR1E/PAF53 and decreased RNA polymerase I transcription. Required to restore the transcription of ribosomal RNA (rRNA) at the exit from mitosis. Promotes pre-ribosomal RNA (pre-rRNA) cleavage at the 5'-terminal processing site by mediating deacetylation of RRP9/U3-55K, a core subunit of the U3 snoRNP complex. Mediates 'Lys-37' deacetylation of Ran, thereby regulating the nuclear export of NF-kappa-B subunit RELA/p65. Acts as a regulator of DNA damage repair by mediating deacetylation of ATM during the late stages of DNA damage response, promoting ATM dephosphorylation and deactivation. Suppresses the activity of the DCX (DDB1-CUL4-X-box) E3 ubiquitin-protein ligase complexes by mediating deacetylation of DDB1, which prevents the interaction between DDB1 and CUL4 (CUL4A or CUL4B). Activates RNA polymerase II transcription by mediating deacetylation of CDK9, thereby promoting 'Ser-2' phosphorylation of the C-terminal domain (CTD) of RNA polymerase II. Deacetylates FBL, promoting histone-glutamine methyltransferase activity of FBL. Acts as a regulator of mitochondrial function by catalyzing deacetylation of GABPB1. Regulates Akt/AKT1 activity by mediating deacetylation of FKBP5/FKBP51. Required to prevent R-loop-associated DNA damage and transcription-associated genomic instability by mediating deacetylation and subsequent activation of DDX21, thereby overcoming R-loop-mediated stalling of RNA polymerases. In addition to protein deacetylase activity, also acts as a protein-lysine deacylase. Acts as a protein depropionylase by mediating depropionylation of Osterix (SP7), thereby regulating bone formation by osteoblasts. Acts as a histone deglutarylase by mediating deglutarylation of histone H4 on 'Lys-91' (H4K91glu); a mark that destabilizes nucleosomes by promoting dissociation of the H2A-H2B dimers from nucleosomes. Acts as a histone desuccinylase: in response to DNA damage, recruited to DNA double-strand breaks (DSBs) and catalyzes desuccinylation of histone H3 on 'Lys-122' (H3K122succ), thereby promoting chromatin condensation and DSB repair. Also promotes DSB repair by promoting H3K18Ac deacetylation, regulating non-homologous end joining (NHEJ). Along with its role in DNA repair, required for chromosome synapsis during prophase I of female meiosis by catalyzing H3K18Ac deacetylation. Involved in transcriptional repression of LINE-1 retrotransposon via H3K18Ac deacetylation, and promotes their association with the nuclear lamina. Required to stabilize ribosomal DNA (rDNA) heterochromatin and prevent cellular senescence induced by rDNA instability. Acts as a negative regulator of SIRT1 by preventing autodeacetylation of SIRT1, restricting SIRT1 deacetylase activity. The protein is NAD-dependent protein deacetylase sirtuin-7 (SIRT7) of Bos taurus (Bovine).